The primary structure comprises 241 residues: Probable transcriptional regulatory protein lin1570 (241 aa).

Residues methionine 1–lysine 14 are compositionally biased toward polar residues. A disordered region spans residues methionine 1–serine 22.

The protein belongs to the TACO1 family.

It localises to the cytoplasm. The chain is Probable transcriptional regulatory protein lin1570 from Listeria innocua serovar 6a (strain ATCC BAA-680 / CLIP 11262).